The following is a 170-amino-acid chain: Putative zinc finger protein 542 (170 aa).

In terms of domain architecture, KRAB spans 1–42 (MLENYQNLVWLGLSISKSVISLLEKRKLPWIMAKEEIRGPLP). 2 C2H2-type zinc fingers span residues 98–120 (NVCK…KRNH) and 126–148 (NQCL…QRIH). The segment at 154-170 (YKCNECIKTFNQRAHLT) adopts a C2H2-type 3; degenerate zinc-finger fold.

The protein belongs to the krueppel C2H2-type zinc-finger protein family.

It is found in the nucleus. Functionally, may be involved in transcriptional regulation. The chain is Putative zinc finger protein 542 (ZNF542P) from Homo sapiens (Human).